The sequence spans 212 residues: Large ribosomal subunit protein uL4 (212 aa).

Positions 43–52 (NNRQGTASTK) are enriched in polar residues. The segment at 43–77 (NNRQGTASTKTRSEVRGGGRKPWRQKGTGRARAGS) is disordered. Positions 60–71 (GGRKPWRQKGTG) are enriched in basic residues.

The protein belongs to the universal ribosomal protein uL4 family. As to quaternary structure, part of the 50S ribosomal subunit.

One of the primary rRNA binding proteins, this protein initially binds near the 5'-end of the 23S rRNA. It is important during the early stages of 50S assembly. It makes multiple contacts with different domains of the 23S rRNA in the assembled 50S subunit and ribosome. Its function is as follows. Forms part of the polypeptide exit tunnel. The chain is Large ribosomal subunit protein uL4 from Trichodesmium erythraeum (strain IMS101).